We begin with the raw amino-acid sequence, 204 residues long: Small heat shock protein, chloroplastic (204 aa).

The disordered stretch occupies residues 34 to 55; the sequence is QMGRVDHDHELDDRSNRAPISR. Residues 37 to 49 show a composition bias toward basic and acidic residues; that stretch reads RVDHDHELDDRSN. The 107-residue stretch at 98–204 folds into the sHSP domain; the sequence is GSGRAMRRGW…KKDVFQVMVD (107 aa).

Belongs to the small heat shock protein (HSP20) family.

Its subcellular location is the plastid. It is found in the chloroplast stroma. The sequence is that of Small heat shock protein, chloroplastic (HSP23) from Oxybasis rubra (Red goosefoot).